The chain runs to 260 residues: Thiazole synthase (260 aa).

The active-site Schiff-base intermediate with DXP is the Lys-102. 1-deoxy-D-xylulose 5-phosphate-binding positions include Gly-163, 189 to 190 (AG), and 211 to 212 (NT).

This sequence belongs to the ThiG family. As to quaternary structure, homotetramer. Forms heterodimers with either ThiH or ThiS.

It is found in the cytoplasm. The enzyme catalyses [ThiS sulfur-carrier protein]-C-terminal-Gly-aminoethanethioate + 2-iminoacetate + 1-deoxy-D-xylulose 5-phosphate = [ThiS sulfur-carrier protein]-C-terminal Gly-Gly + 2-[(2R,5Z)-2-carboxy-4-methylthiazol-5(2H)-ylidene]ethyl phosphate + 2 H2O + H(+). It functions in the pathway cofactor biosynthesis; thiamine diphosphate biosynthesis. Its function is as follows. Catalyzes the rearrangement of 1-deoxy-D-xylulose 5-phosphate (DXP) to produce the thiazole phosphate moiety of thiamine. Sulfur is provided by the thiocarboxylate moiety of the carrier protein ThiS. In vitro, sulfur can be provided by H(2)S. In Geobacter metallireducens (strain ATCC 53774 / DSM 7210 / GS-15), this protein is Thiazole synthase.